Reading from the N-terminus, the 228-residue chain is UPF0758 protein stu1465 (228 aa).

In terms of domain architecture, MPN spans glutamine 103 to aspartate 225. 3 residues coordinate Zn(2+): histidine 174, histidine 176, and aspartate 187. The short motif at histidine 174–aspartate 187 is the JAMM motif element.

It belongs to the UPF0758 family.

This is UPF0758 protein stu1465 from Streptococcus thermophilus (strain ATCC BAA-250 / LMG 18311).